Reading from the N-terminus, the 922-residue chain is Phosphoenolpyruvate carboxylase (922 aa).

The interval 1 to 20 (MTKTLHARPSAATDTTFAPP) is disordered. Active-site residues include histidine 142 and lysine 581.

The protein belongs to the PEPCase type 1 family. The cofactor is Mg(2+).

The catalysed reaction is oxaloacetate + phosphate = phosphoenolpyruvate + hydrogencarbonate. Forms oxaloacetate, a four-carbon dicarboxylic acid source for the tricarboxylic acid cycle. In Methylorubrum extorquens (strain ATCC 14718 / DSM 1338 / JCM 2805 / NCIMB 9133 / AM1) (Methylobacterium extorquens), this protein is Phosphoenolpyruvate carboxylase (ppc).